Reading from the N-terminus, the 596-residue chain is 3-hydroxy-3-methylglutaryl-coenzyme A reductase 1 (596 aa).

The tract at residues 1-29 (MDVRRRPVKPLYTSKDASAGEPLKQQEVS) is disordered. The next 2 membrane-spanning stretches (helical) occupy residues 41–61 (LYLT…FLLV) and 83–103 (AMVS…IGFV). The tract at residues 104-183 (QSFVSRSNSD…SPIIMPALSE (80 aa)) is linker. Residues 184–596 (DDEEIIQSVV…YNRSIKDISK (413 aa)) form a catalytic region. The active-site Charge relay system is the Glu-278. N-linked (GlcNAc...) asparagine glycosylation is present at Asn-342. Lys-410 functions as the Charge relay system in the catalytic mechanism. The N-linked (GlcNAc...) asparagine glycan is linked to Asn-455. The active-site Charge relay system is Asp-486. His-584 acts as the Proton donor in catalysis. Asn-588 carries N-linked (GlcNAc...) asparagine glycosylation.

Belongs to the HMG-CoA reductase family. In terms of tissue distribution, expressed in flower primordia and anthers.

It is found in the endoplasmic reticulum membrane. The enzyme catalyses (R)-mevalonate + 2 NADP(+) + CoA = (3S)-3-hydroxy-3-methylglutaryl-CoA + 2 NADPH + 2 H(+). It participates in metabolic intermediate biosynthesis; (R)-mevalonate biosynthesis; (R)-mevalonate from acetyl-CoA: step 3/3. Catalyzes the synthesis of mevalonate. The specific precursor of all isoprenoid compounds present in plants. The sequence is that of 3-hydroxy-3-methylglutaryl-coenzyme A reductase 1 (HMG1) from Solanum tuberosum (Potato).